Reading from the N-terminus, the 348-residue chain is Mitogen-activated protein kinase 14B (348 aa).

In terms of domain architecture, Protein kinase spans 25 to 309 (YQNLSPVGSG…ASQALAHPYF (285 aa)). ATP is bound by residues 31 to 39 (VGSGAYGSV) and lysine 54. Aspartate 169 functions as the Proton acceptor in the catalytic mechanism. Threonine 181 carries the post-translational modification Phosphothreonine; by MAP2K3. Residues 181–183 (TGY) carry the TXY motif. The residue at position 183 (tyrosine 183) is a Phosphotyrosine; by MAP2K3.

The protein belongs to the protein kinase superfamily. CMGC Ser/Thr protein kinase family. MAP kinase subfamily. Mg(2+) is required as a cofactor. In terms of processing, dually phosphorylated on Thr-181 and Tyr-183, which activates the enzyme.

The protein localises to the cytoplasm. The protein resides in the nucleus. It catalyses the reaction L-seryl-[protein] + ATP = O-phospho-L-seryl-[protein] + ADP + H(+). The enzyme catalyses L-threonyl-[protein] + ATP = O-phospho-L-threonyl-[protein] + ADP + H(+). Activated by threonine and tyrosine phosphorylation by the dual specificity kinase, MKK3. In terms of biological role, serine/threonine kinase which acts as an essential component of the MAP kinase signal transduction pathway. Mapk14b is one of the four p38 MAPKs which play an important role in the cascades of cellular responses evoked by extracellular stimuli such as pro-inflammatory cytokines or physical stress leading to direct activation of transcription factors. Accordingly, p38 MAPKs phosphorylate a broad range of proteins and it has been estimated that they may have approximately 200 to 300 substrates each. Some of the targets are downstream kinases which are activated through phosphorylation and further phosphorylate additional targets. The chain is Mitogen-activated protein kinase 14B (mapk14b) from Danio rerio (Zebrafish).